Reading from the N-terminus, the 365-residue chain is Histidinol-phosphate aminotransferase (365 aa).

The disordered stretch occupies residues 1 to 22; sequence MSRPVPNPGILDIAPYTPGKSP. The residue at position 221 (Lys-221) is an N6-(pyridoxal phosphate)lysine.

This sequence belongs to the class-II pyridoxal-phosphate-dependent aminotransferase family. Histidinol-phosphate aminotransferase subfamily. In terms of assembly, homodimer. Requires pyridoxal 5'-phosphate as cofactor.

The enzyme catalyses L-histidinol phosphate + 2-oxoglutarate = 3-(imidazol-4-yl)-2-oxopropyl phosphate + L-glutamate. It functions in the pathway amino-acid biosynthesis; L-histidine biosynthesis; L-histidine from 5-phospho-alpha-D-ribose 1-diphosphate: step 7/9. The protein is Histidinol-phosphate aminotransferase of Rhodopseudomonas palustris (strain BisB5).